The following is a 396-amino-acid chain: DNA polymerase IV (396 aa).

Residues 5–192 (IFHVDVNSAF…LPVGELFMVG (188 aa)) form the UmuC domain. Residues Asp9 and Asp111 each contribute to the Mg(2+) site. The active site involves Glu112.

Belongs to the DNA polymerase type-Y family. As to quaternary structure, monomer. The cofactor is Mg(2+).

It is found in the cytoplasm. It carries out the reaction DNA(n) + a 2'-deoxyribonucleoside 5'-triphosphate = DNA(n+1) + diphosphate. Poorly processive, error-prone DNA polymerase involved in untargeted mutagenesis. Copies undamaged DNA at stalled replication forks, which arise in vivo from mismatched or misaligned primer ends. These misaligned primers can be extended by PolIV. Exhibits no 3'-5' exonuclease (proofreading) activity. May be involved in translesional synthesis, in conjunction with the beta clamp from PolIII. The chain is DNA polymerase IV from Clostridium acetobutylicum (strain ATCC 824 / DSM 792 / JCM 1419 / IAM 19013 / LMG 5710 / NBRC 13948 / NRRL B-527 / VKM B-1787 / 2291 / W).